Reading from the N-terminus, the 297-residue chain is Beta-glucoside kinase (297 aa).

Position 5–11 (5–11 (AFDIGGT)) interacts with ATP.

This sequence belongs to the ROK (NagC/XylR) family. In terms of assembly, homotetramer.

It carries out the reaction D-cellobiose + ATP = 6-phospho-beta-D-glucosyl-(1-&gt;4)-D-glucose + ADP + H(+). Is inhibited by N-ethylmaleimide in vitro, but ATP affords considerable protection against the inhibitor. In terms of biological role, catalyzes the ATP-dependent phosphorylation of a wide variety of beta-D-glucosides, to produce 6-phospho-beta-D-glucosides including cellobiose-6'-P, gentiobiose-6'-P, cellobiitol-6-P, salicin-6-P, and arbutin-6-P. Is not able to phosphorylate alpha-D-glucosides. May have a dual role of kinase and transcriptional regulator of the cellobiose-PTS operon. The sequence is that of Beta-glucoside kinase (bglK) from Klebsiella pneumoniae.